The primary structure comprises 449 residues: Tubulin alpha-1 chain (449 aa).

Positions 11, 71, 140, 144, 145, 179, 206, and 228 each coordinate GTP. E71 contacts Mg(2+). E254 is an active-site residue.

The protein belongs to the tubulin family. As to quaternary structure, dimer of alpha and beta chains. A typical microtubule is a hollow water-filled tube with an outer diameter of 25 nm and an inner diameter of 15 nM. Alpha-beta heterodimers associate head-to-tail to form protofilaments running lengthwise along the microtubule wall with the beta-tubulin subunit facing the microtubule plus end conferring a structural polarity. Microtubules usually have 13 protofilaments but different protofilament numbers can be found in some organisms and specialized cells. The cofactor is Mg(2+).

The protein resides in the cytoplasm. The protein localises to the cytoskeleton. It carries out the reaction GTP + H2O = GDP + phosphate + H(+). In terms of biological role, tubulin is the major constituent of microtubules, a cylinder consisting of laterally associated linear protofilaments composed of alpha- and beta-tubulin heterodimers. Microtubules grow by the addition of GTP-tubulin dimers to the microtubule end, where a stabilizing cap forms. Below the cap, tubulin dimers are in GDP-bound state, owing to GTPase activity of alpha-tubulin. The sequence is that of Tubulin alpha-1 chain (tubA) from Emericella nidulans (strain FGSC A4 / ATCC 38163 / CBS 112.46 / NRRL 194 / M139) (Aspergillus nidulans).